Consider the following 185-residue polypeptide: MRKDAKENRQRIEEIAHKLFDEEGVENISMNRIAKELGIGMGTLYRHFKDKSDLCYYVIQRDLDIFITHFKQIKDDYHSNYEVMQVSLDYLLQFKIDHKALLQCIEAGNNKLRFYQSAFYQELFYFYYDLFKSDDDIYTKFKTDMLLQALSTRVFDFQIEHRNISIEAYRNYLLNIYLDEVERND.

In terms of domain architecture, HTH tetR-type spans lysine 6–phenylalanine 66. Positions serine 29–phenylalanine 48 form a DNA-binding region, H-T-H motif.

In Staphylococcus aureus (strain MRSA252), this protein is HTH-type transcriptional regulator SAR2658.